We begin with the raw amino-acid sequence, 330 residues long: Taste receptor type 2 member 117 (330 aa).

Residues 1 to 16 lie on the Extracellular side of the membrane; the sequence is MKHFWKILSVISQSTL. A helical transmembrane segment spans residues 17–37; that stretch reads SVILIVELVIGIIGNGFMVLV. The Cytoplasmic portion of the chain corresponds to 38 to 53; the sequence is HCMDWVKKKKMSLVNQ. Residues 54–74 traverse the membrane as a helical segment; it reads ILTALSISRIFQLCLLFISLV. Residues 75–95 are Extracellular-facing; it reads INFSYTDLTTSSRMIQVMYNA. N-linked (GlcNAc...) asparagine glycosylation occurs at Asn76. A helical transmembrane segment spans residues 96 to 116; the sequence is WILANHFSIWIATCLTVLYFL. The Cytoplasmic portion of the chain corresponds to 117-135; sequence KIANFSNSFFLYLKWRVEK. A helical transmembrane segment spans residues 136 to 156; sequence VVSVTLLVSLLLLILNILLTN. The Extracellular portion of the chain corresponds to 157–190; it reads LETDMWTNEYQRNISCSFSSHYYAKCHRQVLRLH. Asn169 carries an N-linked (GlcNAc...) asparagine glycan. Residues 191 to 211 form a helical membrane-spanning segment; the sequence is IIFLSVPVVLSLSTFLLLIFS. The Cytoplasmic portion of the chain corresponds to 212-239; the sequence is LWTHHKRMQQHVQGGRDARTTAHFKALQ. A helical transmembrane segment spans residues 240 to 260; the sequence is TVIAFFLLYSIFILSVLIQIW. The Extracellular segment spans residues 261-269; sequence KYELLKKNL. The chain crosses the membrane as a helical span at residues 270-290; it reads FVVFCEVVYIAFPTFHSYILI. At 291 to 330 the chain is on the cytoplasmic side; the sequence is VGDMKLRQACLPLCIIAAEIQTTLCRNFRSLKYFRLCCIF.

It belongs to the G-protein coupled receptor T2R family.

It is found in the membrane. In terms of biological role, putative taste receptor which may play a role in the perception of bitterness. This Mus musculus (Mouse) protein is Taste receptor type 2 member 117.